Consider the following 847-residue polypeptide: Alpha-glucuronidase (847 aa).

Residues 1-19 form the signal peptide; it reads MVIRSLLLLLLAAIVPVFA. Residues Asn-52, Asn-238, Asn-321, Asn-353, Asn-586, Asn-692, Asn-740, and Asn-767 are each glycosylated (N-linked (GlcNAc...) asparagine).

It belongs to the glycosyl hydrolase 67 family.

It is found in the secreted. It catalyses the reaction an alpha-D-glucuronoside + H2O = D-glucuronate + an alcohol. Functionally, releases 4-O-methylglucuronic acid from xylan. This Hypocrea jecorina (Trichoderma reesei) protein is Alpha-glucuronidase.